Consider the following 467-residue polypeptide: 55 kDa erythrocyte membrane protein (467 aa).

One can recognise a PDZ domain in the interval 73–154 (EVAFEKNQSE…VVTMKIIPRP (82 aa)). Residues 160–230 (PCEMYMRGQF…PSPELQEWRA (71 aa)) enclose the SH3 domain. Positions 283 to 452 (RKTLVLIGAP…SVKIVEEALE (170 aa)) constitute a Guanylate kinase-like domain.

This sequence belongs to the MAGUK family. In terms of processing, extensively palmitoylated.

It localises to the membrane. May play a role in the regulation of neutrophil polarization. The chain is 55 kDa erythrocyte membrane protein (mpp1) from Takifugu rubripes (Japanese pufferfish).